A 394-amino-acid chain; its full sequence is Elongation factor Tu (394 aa).

Residues 10–204 (KPHINIGTIG…AVDDNIPTPE (195 aa)) form the tr-type G domain. Positions 19 to 26 (GHVDHGKT) are G1. Position 19-26 (19-26 (GHVDHGKT)) interacts with GTP. T26 is a binding site for Mg(2+). A G2 region spans residues 60–64 (GITIN). A G3 region spans residues 81-84 (DCPG). GTP contacts are provided by residues 81 to 85 (DCPGH) and 136 to 139 (NKID). A G4 region spans residues 136–139 (NKID). The tract at residues 174 to 176 (SAL) is G5.

This sequence belongs to the TRAFAC class translation factor GTPase superfamily. Classic translation factor GTPase family. EF-Tu/EF-1A subfamily. As to quaternary structure, monomer.

The protein resides in the cytoplasm. The enzyme catalyses GTP + H2O = GDP + phosphate + H(+). Functionally, GTP hydrolase that promotes the GTP-dependent binding of aminoacyl-tRNA to the A-site of ribosomes during protein biosynthesis. The protein is Elongation factor Tu of Chlamydia abortus (strain DSM 27085 / S26/3) (Chlamydophila abortus).